The following is a 334-amino-acid chain: Lipoyl synthase (334 aa).

[4Fe-4S] cluster is bound by residues Cys-71, Cys-76, Cys-82, Cys-97, Cys-101, Cys-104, and Ser-312. Residues 83-301 form the Radical SAM core domain; the sequence is WSHGTATFMV…RQEGLRRGFR (219 aa).

It belongs to the radical SAM superfamily. Lipoyl synthase family. Requires [4Fe-4S] cluster as cofactor.

Its subcellular location is the cytoplasm. It carries out the reaction [[Fe-S] cluster scaffold protein carrying a second [4Fe-4S](2+) cluster] + N(6)-octanoyl-L-lysyl-[protein] + 2 oxidized [2Fe-2S]-[ferredoxin] + 2 S-adenosyl-L-methionine + 4 H(+) = [[Fe-S] cluster scaffold protein] + N(6)-[(R)-dihydrolipoyl]-L-lysyl-[protein] + 4 Fe(3+) + 2 hydrogen sulfide + 2 5'-deoxyadenosine + 2 L-methionine + 2 reduced [2Fe-2S]-[ferredoxin]. It functions in the pathway protein modification; protein lipoylation via endogenous pathway; protein N(6)-(lipoyl)lysine from octanoyl-[acyl-carrier-protein]: step 2/2. In terms of biological role, catalyzes the radical-mediated insertion of two sulfur atoms into the C-6 and C-8 positions of the octanoyl moiety bound to the lipoyl domains of lipoate-dependent enzymes, thereby converting the octanoylated domains into lipoylated derivatives. In Halorhodospira halophila (strain DSM 244 / SL1) (Ectothiorhodospira halophila (strain DSM 244 / SL1)), this protein is Lipoyl synthase.